A 404-amino-acid chain; its full sequence is MHC class I-like protein MILL1 (404 aa).

The N-terminal stretch at 1–30 (MMLSRDLRAEAAVRLWIMFLLLEDLLGACA) is a signal peptide. Positions 59-150 (EVAGPHTLRY…VTGQKGQDKG (92 aa)) are alpha-1. 3 N-linked (GlcNAc...) asparagine glycosylation sites follow: Asn-98, Asn-102, and Asn-165. The interval 151-242 (LHILQATLGC…SLRSEPLDTG (92 aa)) is alpha-2. 2 disulfides stabilise this stretch: Cys-160–Cys-223 and Cys-262–Cys-322. Residues 224–338 (PAQLQRHLAS…GNIEKRAVIV (115 aa)) form the Ig-like C1-type domain. The alpha-3 stretch occupies residues 243–342 (SPMVIVTFRN…KRAVIVNTVS (100 aa)). Asn-323 carries an N-linked (GlcNAc...) asparagine glycan. Residues 343–373 (GEKTRQPSTSGVGGRVKKSLWTTMTTAFMVT) form a connecting peptide region. Ser-374 is lipidated: GPI-anchor amidated serine. Residues 375–404 (WTRKTGGDSTLLLLWWLLFFSTVLAVLTLV) constitute a propeptide, removed in mature form.

Belongs to the MHC class I family. Heterodimer with B2M. In terms of tissue distribution, detected in skin, esophagus, tongue, skin, muscle, uterus, ovary, testis and epididymis.

The protein localises to the cell membrane. The polypeptide is MHC class I-like protein MILL1 (Rattus norvegicus (Rat)).